The following is a 248-amino-acid chain: 14-3-3-like protein 2 (248 aa).

It belongs to the 14-3-3 family. As to quaternary structure, interacts with daf-16. Interacts with sir-2.1. Interacts with hcf-1.

Its subcellular location is the cytoplasm. It localises to the nucleus. Its function is as follows. Required for extension of lifespan by sir-2.1. Required to modulate lifespan, in concert with hcf-1, acting redundantly with 14-3-3-like protein par-5. Promotes nuclear export of yap-1. Negatively regulates the transcriptional activity of daf-16 by sequestering it to the cytoplasm. In Caenorhabditis elegans, this protein is 14-3-3-like protein 2.